Here is a 445-residue protein sequence, read N- to C-terminus: Glutamate-1-semialdehyde 2,1-aminomutase (445 aa).

Lys264 is subject to N6-(pyridoxal phosphate)lysine.

Belongs to the class-III pyridoxal-phosphate-dependent aminotransferase family. HemL subfamily. The cofactor is pyridoxal 5'-phosphate.

The protein localises to the cytoplasm. It catalyses the reaction (S)-4-amino-5-oxopentanoate = 5-aminolevulinate. It participates in porphyrin-containing compound metabolism; protoporphyrin-IX biosynthesis; 5-aminolevulinate from L-glutamyl-tRNA(Glu): step 2/2. The polypeptide is Glutamate-1-semialdehyde 2,1-aminomutase (Halobacterium salinarum (strain ATCC 29341 / DSM 671 / R1)).